The sequence spans 157 residues: Small ribosomal subunit protein uS7 (157 aa).

The protein belongs to the universal ribosomal protein uS7 family. In terms of assembly, part of the 30S ribosomal subunit. Contacts proteins S9 and S11.

Functionally, one of the primary rRNA binding proteins, it binds directly to 16S rRNA where it nucleates assembly of the head domain of the 30S subunit. Is located at the subunit interface close to the decoding center, probably blocks exit of the E-site tRNA. The sequence is that of Small ribosomal subunit protein uS7 from Chlamydia trachomatis serovar A (strain ATCC VR-571B / DSM 19440 / HAR-13).